Reading from the N-terminus, the 235-residue chain is ATP synthase subunit a (235 aa).

Helical transmembrane passes span 17–37 (TTNI…LYGM), 76–96 (SFFA…GLIF), 113–133 (PVVT…AGVA), 179–201 (LLMS…PGLF), and 211–230 (VFIG…VYIS).

This sequence belongs to the ATPase A chain family. In terms of assembly, F-type ATPases have 2 components, CF(1) - the catalytic core - and CF(0) - the membrane proton channel. CF(1) has five subunits: alpha(3), beta(3), gamma(1), delta(1), epsilon(1). CF(0) has three main subunits: a(1), b(2) and c(9-12). The alpha and beta chains form an alternating ring which encloses part of the gamma chain. CF(1) is attached to CF(0) by a central stalk formed by the gamma and epsilon chains, while a peripheral stalk is formed by the delta and b chains.

It localises to the cell membrane. Its function is as follows. Key component of the proton channel; it plays a direct role in the translocation of protons across the membrane. In Limosilactobacillus reuteri subsp. reuteri (strain JCM 1112) (Lactobacillus reuteri), this protein is ATP synthase subunit a.